A 2286-amino-acid polypeptide reads, in one-letter code: DNA polymerase epsilon catalytic subunit A (2286 aa).

A disordered region spans residues Met-1–Ser-30. The segment covering Arg-9–Gly-24 has biased composition (basic and acidic residues). 4 positions are modified to phosphoserine: Ser-1184, Ser-1297, Ser-1317, and Ser-1940. Residues Asp-1939–Glu-1969 are disordered. The segment covering Ala-1946–Glu-1969 has biased composition (acidic residues). 4 residues coordinate Zn(2+): Cys-2158, Cys-2161, Cys-2187, and Cys-2190. The CysA-type zinc-finger motif lies at Cys-2158 to Cys-2190. [4Fe-4S] cluster contacts are provided by Cys-2221, Cys-2224, Cys-2236, and Cys-2238. The CysB motif motif lies at Cys-2221–Cys-2238.

This sequence belongs to the DNA polymerase type-B family. As to quaternary structure, component of the DNA polymerase epsilon complex consisting of four subunits: the catalytic subunit POLE and the accessory subunits POLE2, POLE3 and POLE4. Interacts with RAD17 and TOPBP1.

It is found in the nucleus. It carries out the reaction DNA(n) + a 2'-deoxyribonucleoside 5'-triphosphate = DNA(n+1) + diphosphate. Catalytic component of the DNA polymerase epsilon complex. Participates in chromosomal DNA replication. Required during synthesis of the leading DNA strands at the replication fork, binds at/or near replication origins and moves along DNA with the replication fork. Has 3'-5' proofreading exonuclease activity that corrects errors arising during DNA replication. Involved in DNA synthesis during DNA repair. Along with DNA polymerase POLD1 and DNA polymerase POLK, has a role in excision repair (NER) synthesis following UV irradiation. In Homo sapiens (Human), this protein is DNA polymerase epsilon catalytic subunit A.